A 102-amino-acid polypeptide reads, in one-letter code: Small ribosomal subunit protein uS10 (102 aa).

A disordered region spans residues 34–58; it reads VSGPVPLPTKTLEVPSRKSPDGEGT.

The protein belongs to the universal ribosomal protein uS10 family. Part of the 30S ribosomal subunit.

Involved in the binding of tRNA to the ribosomes. The chain is Small ribosomal subunit protein uS10 from Halobacterium salinarum (strain ATCC 29341 / DSM 671 / R1).